Here is a 460-residue protein sequence, read N- to C-terminus: Chromosomal replication initiator protein DnaA (460 aa).

The tract at residues 1–78 (MENFWQACSA…VPVEVQFVLD (78 aa)) is domain I, interacts with DnaA modulators. Residues 78–123 (DPRLVAARRPAAQASVVSDRADDVPSNVLEPIPSNATDHTPRRDQS) are domain II. Residues 124-340 (RINTALTFDS…GALRKILAYS (217 aa)) form a domain III, AAA+ region region. ATP-binding residues include Gly168, Gly170, Lys171, and Thr172. Positions 341 to 460 (RFHGKDITIE…LHVLEQTLKG (120 aa)) are domain IV, binds dsDNA.

This sequence belongs to the DnaA family. As to quaternary structure, oligomerizes as a right-handed, spiral filament on DNA at oriC.

The protein localises to the cytoplasm. Plays an essential role in the initiation and regulation of chromosomal replication. ATP-DnaA binds to the origin of replication (oriC) to initiate formation of the DNA replication initiation complex once per cell cycle. Binds the DnaA box (a 9 base pair repeat at the origin) and separates the double-stranded (ds)DNA. Forms a right-handed helical filament on oriC DNA; dsDNA binds to the exterior of the filament while single-stranded (ss)DNA is stabiized in the filament's interior. The ATP-DnaA-oriC complex binds and stabilizes one strand of the AT-rich DNA unwinding element (DUE), permitting loading of DNA polymerase. After initiation quickly degrades to an ADP-DnaA complex that is not apt for DNA replication. Binds acidic phospholipids. The chain is Chromosomal replication initiator protein DnaA from Herminiimonas arsenicoxydans.